The sequence spans 162 residues: Ribosome maturation factor RimM (162 aa).

Residues 86–160 enclose the PRC barrel domain; sequence EGRYYYFALI…GIHVDPIPGL (75 aa).

Belongs to the RimM family. As to quaternary structure, binds ribosomal protein uS19.

It is found in the cytoplasm. Its function is as follows. An accessory protein needed during the final step in the assembly of 30S ribosomal subunit, possibly for assembly of the head region. Essential for efficient processing of 16S rRNA. May be needed both before and after RbfA during the maturation of 16S rRNA. It has affinity for free ribosomal 30S subunits but not for 70S ribosomes. This Thermus thermophilus (strain ATCC BAA-163 / DSM 7039 / HB27) protein is Ribosome maturation factor RimM.